The following is a 289-amino-acid chain: CRISPR system Cms protein Csm4 (289 aa).

This sequence belongs to the CRISPR-associated Csm4 family. In terms of assembly, probably part of the Csm effector complex, that includes Cas10, Csm2, Csm3, Csm4, Csm5 and mature crRNA. Interacts with Cas10 (csm1).

CRISPR (clustered regularly interspaced short palindromic repeat) is an adaptive immune system that provides protection against mobile genetic elements (viruses, transposable elements and conjugative plasmids). CRISPR clusters contain spacers, sequences complementary to antecedent mobile elements, and target invading nucleic acids. CRISPR clusters are transcribed and processed into CRISPR RNA (crRNA). The type III-A Csm effector complex binds crRNA and acts as a crRNA-guided RNase, DNase and cyclic oligoadenylate synthase; binding of target RNA cognate to the crRNA is required for all activities. In terms of biological role, the subunit probably binds to the 5' handle of the crRNA, helping in discrimination between self- and non-self. This Thermococcus onnurineus (strain NA1) protein is CRISPR system Cms protein Csm4.